The primary structure comprises 1099 residues: DNA-directed RNA polymerase subunit beta (1099 aa).

The protein belongs to the RNA polymerase beta chain family. As to quaternary structure, in plastids the minimal PEP RNA polymerase catalytic core is composed of four subunits: alpha, beta, beta', and beta''. When a (nuclear-encoded) sigma factor is associated with the core the holoenzyme is formed, which can initiate transcription.

It is found in the plastid. The protein resides in the chloroplast. It catalyses the reaction RNA(n) + a ribonucleoside 5'-triphosphate = RNA(n+1) + diphosphate. In terms of biological role, DNA-dependent RNA polymerase catalyzes the transcription of DNA into RNA using the four ribonucleoside triphosphates as substrates. This chain is DNA-directed RNA polymerase subunit beta, found in Bigelowiella natans (Pedinomonas minutissima).